A 208-amino-acid polypeptide reads, in one-letter code: Small ribosomal subunit protein uS4 (208 aa).

The tract at residues Ser-31–Ser-51 is disordered. One can recognise an S4 RNA-binding domain in the interval Arg-98–Gln-156.

The protein belongs to the universal ribosomal protein uS4 family. Part of the 30S ribosomal subunit. Contacts protein S5. The interaction surface between S4 and S5 is involved in control of translational fidelity.

Functionally, one of the primary rRNA binding proteins, it binds directly to 16S rRNA where it nucleates assembly of the body of the 30S subunit. In terms of biological role, with S5 and S12 plays an important role in translational accuracy. The sequence is that of Small ribosomal subunit protein uS4 from Helicobacter pylori (strain HPAG1).